The sequence spans 547 residues: Solute carrier family 22 member 25 (547 aa).

Residues methionine 1–glutamine 9 lie on the Cytoplasmic side of the membrane. The chain crosses the membrane as a helical span at residues valine 10–isoleucine 30. The Extracellular portion of the chain corresponds to valine 31–asparagine 145. N-linked (GlcNAc...) asparagine glycans are attached at residues asparagine 56 and asparagine 102. Residues serine 146–leucine 166 form a helical membrane-spanning segment. Topologically, residues serine 167 to arginine 177 are cytoplasmic. The chain crosses the membrane as a helical span at residues tryptophan 178 to valine 198. Topologically, residues tyrosine 199–phenylalanine 204 are extracellular. The chain crosses the membrane as a helical span at residues leucine 205–isoleucine 225. Residues threonine 226–leucine 234 are Cytoplasmic-facing. Residues threonine 235–isoleucine 255 form a helical membrane-spanning segment. Over arginine 256–cysteine 259 the chain is Extracellular. Residues isoleucine 260–alanine 280 traverse the membrane as a helical segment. At glutamate 281–arginine 349 the chain is on the cytoplasmic side. Residues isoleucine 350–histidine 370 traverse the membrane as a helical segment. Topologically, residues leucine 371–asparagine 377 are extracellular. The chain crosses the membrane as a helical span at residues valine 378–tryptophan 398. The Cytoplasmic portion of the chain corresponds to alanine 399–arginine 406. The chain crosses the membrane as a helical span at residues leucine 407–proline 427. At glutamine 428 to arginine 434 the chain is on the extracellular side. A helical membrane pass occupies residues valine 435 to glutamine 455. Topologically, residues glutamate 456 to glycine 470 are cytoplasmic. Residues isoleucine 471–isoleucine 491 form a helical membrane-spanning segment. The Extracellular portion of the chain corresponds to tyrosine 492–arginine 494. Residues proline 495 to leucine 515 form a helical membrane-spanning segment. Topologically, residues proline 516–leucine 547 are cytoplasmic.

This sequence belongs to the major facilitator (TC 2.A.1) superfamily. Organic cation transporter (TC 2.A.1.19) family. Expressed exclusively in liver in both embryo and adult.

It localises to the membrane. The polypeptide is Solute carrier family 22 member 25 (Homo sapiens (Human)).